Here is a 64-residue protein sequence, read N- to C-terminus: Large ribosomal subunit protein bL35 (64 aa).

It belongs to the bacterial ribosomal protein bL35 family.

The sequence is that of Large ribosomal subunit protein bL35 from Coxiella burnetii (strain RSA 331 / Henzerling II).